The following is a 263-amino-acid chain: Palmitoyltransferase ZDHHC22 (263 aa).

The Cytoplasmic segment spans residues 1-9 (MLALRLLNV). The chain crosses the membrane as a helical span at residues 10–30 (VAPAYFLCISLVTFVLQLFLF). The Lumenal segment spans residues 31–48 (LPSMREDPAAARLFSPAL). A helical transmembrane segment spans residues 49 to 69 (LHGALFLFLSANALGNYVLVI). Residues 70–125 (QNSPDDLGACQGASARKTPCPSPSTHFCRVCARVTLRHDHHCFFTGNCIGSRNMRN) lie on the Cytoplasmic side of the membrane. In terms of domain architecture, DHHC spans 92 to 131 (PSTHFCRVCARVTLRHDHHCFFTGNCIGSRNMRNFVLFCL). Cysteine 111 acts as the S-palmitoyl cysteine intermediate in catalysis. Transmembrane regions (helical) follow at residues 126-146 (FVLF…AGVA) and 147-167 (YISA…TLLP). The Cytoplasmic portion of the chain corresponds to 168–182 (TSISQFFSGAVLGSE). The helical transmembrane segment at 183–203 (MFVILMLYLWFAIGLACAGFC) threads the bilayer. Residues 204 to 263 (CHQLLLILRGQTRHQVRKGVAVRARPWRKNLQEVFGKRWLLGLLVPMFNVGSESSKQQDK) are Lumenal-facing.

It belongs to the DHHC palmitoyltransferase family. In terms of assembly, interacts with CNN3. In terms of tissue distribution, widely expressed.

It is found in the endoplasmic reticulum membrane. The protein localises to the golgi apparatus membrane. It carries out the reaction L-cysteinyl-[protein] + hexadecanoyl-CoA = S-hexadecanoyl-L-cysteinyl-[protein] + CoA. In terms of biological role, palmitoyltransferase that could catalyze the addition of palmitate onto various protein substrates and be involved in a variety of cellular processes. Catalyzes the palmitoylation of KCNMA1, regulating localization of KCNMA1 to the plasma membrane. Might also mediate palmitoylation of CNN3. This is Palmitoyltransferase ZDHHC22 from Homo sapiens (Human).